The primary structure comprises 180 residues: ADP-ribosylation factor 4 (180 aa).

Glycine 2 carries N-myristoyl glycine lipidation. GTP is bound by residues 24–31 (GLDAAGKT), 67–71 (DVGGQ), and 126–129 (NKQD). A Phosphoserine modification is found at serine 147.

Belongs to the small GTPase superfamily. Arf family. Forms a complex containing RAB11A, ASAP1, RAB3IP, RAP11FIP3 and ARF4; the complex promotes preciliary trafficking; the complex binds to RHO in photoreceptor cells and promotes RHO ciliary transport.

It is found in the golgi apparatus. Its subcellular location is the membrane. Functionally, GTP-binding protein that functions as an allosteric activator of the cholera toxin catalytic subunit, an ADP-ribosyltransferase. Involved in protein trafficking; may modulate vesicle budding and uncoating within the Golgi apparatus. Part of the ciliary targeting complex containing Rab11, ASAP1, Rabin8/RAB3IP, RAB11FIP3 and ARF4, which direct preciliary vesicle trafficking to mother centriole and ciliogenesis initiation. This Homo sapiens (Human) protein is ADP-ribosylation factor 4 (ARF4).